The chain runs to 175 residues: Ferritin light chain (175 aa).

A Ferritin-like diiron domain is found at 7-156 (QNYSPEVEAA…DHLTNIRRLS (150 aa)). Positions 54, 57, 58, 61, and 64 each coordinate Fe cation.

This sequence belongs to the ferritin family. In terms of assembly, oligomer of 24 subunits. There are two types of subunits: L (light) chain and H (heavy) chain. The major chain can be light or heavy, depending on the species and tissue type. The functional molecule forms a roughly spherical shell with a diameter of 12 nm and contains a central cavity into which the insoluble mineral iron core is deposited. Interacts with NCOA4.

Its subcellular location is the cytoplasmic vesicle. The protein resides in the autophagosome. It localises to the cytoplasm. It is found in the autolysosome. Stores iron in a soluble, non-toxic, readily available form. Important for iron homeostasis. Iron is taken up in the ferrous form and deposited as ferric hydroxides after oxidation. Also plays a role in delivery of iron to cells. Mediates iron uptake in capsule cells of the developing kidney. Delivery to lysosomes by the cargo receptor NCOA4 for autophagic degradation and release or iron. This chain is Ferritin light chain (FTL), found in Oryctolagus cuniculus (Rabbit).